A 121-amino-acid polypeptide reads, in one-letter code: Basic phospholipase A2 homolog 2 (121 aa).

Disulfide bonds link C26–C115, C28–C44, C43–C95, C49–C121, C50–C88, C57–C81, and C75–C86. The important for membrane-damaging activities in eukaryotes and bacteria; heparin-binding stretch occupies residues 105–117 (KKYRYHLKPLCKK).

It belongs to the phospholipase A2 family. Group II subfamily. K49 sub-subfamily. Homodimer; non-covalently linked (probable alternative/compact dimer conformation in solution). As to expression, expressed by the venom gland.

Its subcellular location is the secreted. Snake venom phospholipase A2 homolog that lacks enzymatic activity. Is myotoxic and displays edema-inducing activities in mouse paw. Also displays cytotoxic activity against myotubes. A model of myotoxic mechanism has been proposed: an apo Lys49-PLA2 is activated by the entrance of a hydrophobic molecule (e.g. fatty acid) at the hydrophobic channel of the protein leading to a reorientation of a monomer. This reorientation causes a transition between 'inactive' to 'active' states, causing alignment of C-terminal and membrane-docking sites (MDoS) side-by-side and putting the membrane-disruption sites (MDiS) in the same plane, exposed to solvent and in a symmetric position for both monomers. The MDoS region stabilizes the toxin on membrane by the interaction of charged residues with phospholipid head groups. Subsequently, the MDiS region destabilizes the membrane with penetration of hydrophobic residues. This insertion causes a disorganization of the membrane, allowing an uncontrolled influx of ions (i.e. calcium and sodium), and eventually triggering irreversible intracellular alterations and cell death. The chain is Basic phospholipase A2 homolog 2 from Bothrops brazili (Brazil's lancehead).